Reading from the N-terminus, the 380-residue chain is High affinity transport system protein p37 (380 aa).

Residues 1–26 (MLKRKKLLQGFLKFLPLIIPATIFVS) form the signal peptide. Cys27 is lipidated: N-palmitoyl cysteine. Cys27 carries S-diacylglycerol cysteine lipidation. The tract at residues 285-304 (NHFYTPTENNGKGDSEKSNN) is disordered.

It is found in the cell membrane. Its function is as follows. P37 is part of a high-affinity transport system. The polypeptide is High affinity transport system protein p37 (p37) (Mycoplasma pneumoniae (strain ATCC 29342 / M129 / Subtype 1) (Mycoplasmoides pneumoniae)).